The sequence spans 182 residues: Dynactin subunit 5 (182 aa).

The residue at position 1 (Met-1) is an N-acetylmethionine.

This sequence belongs to the dynactin subunits 5/6 family. Dynactin subunit 5 subfamily. As to quaternary structure, subunit of dynactin, a multiprotein complex part of a tripartite complex with dynein and a adapter, such as BICDL1, BICD2 or HOOK3. The dynactin complex is built around ACTR1A/ACTB filament and consists of an actin-related filament composed of a shoulder domain, a pointed end and a barbed end. Its length is defined by its flexible shoulder domain. The soulder is composed of 2 DCTN1 subunits, 4 DCTN2 and 2 DCTN3. The 4 DCNT2 (via N-terminus) bind the ACTR1A filament and act as molecular rulers to determine the length. The pointed end is important for binding dynein-dynactin cargo adapters. Consists of 4 subunits: ACTR10, DCNT4, DCTN5 and DCTN6. Within the complex DCTN6 forms a heterodimer with DCTN5. The barbed end is composed of a CAPZA1:CAPZB heterodimers, which binds ACTR1A/ACTB filament and dynactin and stabilizes dynactin. Interacts with N4BP2L1.

Its subcellular location is the cytoplasm. It is found in the cytoskeleton. It localises to the chromosome. The protein localises to the centromere. The protein resides in the kinetochore. Functionally, part of the dynactin complex that activates the molecular motor dynein for ultra-processive transport along microtubules. This is Dynactin subunit 5 from Homo sapiens (Human).